A 323-amino-acid polypeptide reads, in one-letter code: Biotin synthase (323 aa).

One can recognise a Radical SAM core domain in the interval 46–264 (TEIQLSSLLS…IAVARITMPR (219 aa)). [4Fe-4S] cluster contacts are provided by C61, C65, and C68. 4 residues coordinate [2Fe-2S] cluster: C105, C136, C196, and R268.

This sequence belongs to the radical SAM superfamily. Biotin synthase family. Homodimer. The cofactor is [4Fe-4S] cluster. Requires [2Fe-2S] cluster as cofactor.

The catalysed reaction is (4R,5S)-dethiobiotin + (sulfur carrier)-SH + 2 reduced [2Fe-2S]-[ferredoxin] + 2 S-adenosyl-L-methionine = (sulfur carrier)-H + biotin + 2 5'-deoxyadenosine + 2 L-methionine + 2 oxidized [2Fe-2S]-[ferredoxin]. It functions in the pathway cofactor biosynthesis; biotin biosynthesis; biotin from 7,8-diaminononanoate: step 2/2. Its function is as follows. Catalyzes the conversion of dethiobiotin (DTB) to biotin by the insertion of a sulfur atom into dethiobiotin via a radical-based mechanism. The sequence is that of Biotin synthase from Bordetella avium (strain 197N).